We begin with the raw amino-acid sequence, 564 residues long: Arginine--tRNA ligase (564 aa).

Positions 130-140 match the 'HIGH' region motif; sequence ANPTGSLHIGH.

This sequence belongs to the class-I aminoacyl-tRNA synthetase family. Monomer.

Its subcellular location is the cytoplasm. The catalysed reaction is tRNA(Arg) + L-arginine + ATP = L-arginyl-tRNA(Arg) + AMP + diphosphate. This chain is Arginine--tRNA ligase, found in Malacoplasma penetrans (strain HF-2) (Mycoplasma penetrans).